Reading from the N-terminus, the 1217-residue chain is Disease resistance protein RPS4 (1217 aa).

In terms of domain architecture, TIR spans 14-175 (PQHQVFINFR…EIVKAVKTAL (162 aa)). Residue 23–28 (RGADLR) coordinates NAD(+). Positions 33–34 (SH) are important for interaction with RRS1. Glutamate 88 is an active-site residue. The NB-ARC domain occupies 211–472 (EQRLKDLEEK…FRSQDKDYVE (262 aa)). LRR repeat units follow at residues 581-606 (MGNL…KINI), 614-636 (LKEV…DFNP), 637-659 (INLV…DKDT), 682-706 (AEKL…MKKM), 708-728 (MLAF…EMNL), 729-749 (ISLK…PLIS), 750-774 (DNIE…KLQR), 796-818 (LKAL…EIDI), 819-842 (SFLN…SVQY), 843-860 (LCLS…GISQ), and 861-887 (LSQL…NLQC). A disordered region spans residues 1161–1195 (TTEGVDGRVNKKKKTRMDNGRPKKKQRSGRDDNQT). Residues 1170 to 1177 (NKKKKTRM) carry the Nuclear localization signal motif.

It belongs to the disease resistance TIR-NB-LRR family. Interacts with EDS1. Interacts with SRFR1. Interacts with RRS1.

It localises to the endomembrane system. Its subcellular location is the cytoplasm. The protein localises to the nucleus. The catalysed reaction is NAD(+) + H2O = ADP-D-ribose + nicotinamide + H(+). In terms of biological role, disease resistance (R) protein that specifically recognizes the AvrRps4 type III effector avirulence protein from P.syringae. Resistance proteins guard the plant against pathogens that contain an appropriate avirulence protein via an indirect interaction with this avirulence protein. That triggers a defense system including the hypersensitive response, which restricts the pathogen growth. Probably acts as a NAD(+) hydrolase (NADase): in response to activation, catalyzes cleavage of NAD(+) into ADP-D-ribose (ADPR) and nicotinamide; NAD(+) cleavage triggering a defense system that promotes cell death. The combined presence of both regular and alternative RPS4 transcripts with truncated open reading frames (ORFs) is necessary for function. RPS4 function is regulated at multiple levels, including gene expression, alternative splicing, and protein stability. When over-expressed, confers temperature-conditioned EDS1-dependent auto-immunity. Heterodimerization with RRS1 is required to form a functional complex to recognize AvrRps4 and PopP2. Abscisic acid deficiency enhances nuclear accumulation of RPS4 and its cell death-inducing activity. In Arabidopsis thaliana (Mouse-ear cress), this protein is Disease resistance protein RPS4.